A 915-amino-acid chain; its full sequence is MAPSSPSSARPTRASGRKRSAMAEEIHQNQEEEEEVVAASTAKRRRKAASSGKKPKPTPKQAKPAVAGMKKKGETEKTEPVVDDVCAEEPDEEELAMGEEEAEAEEQAMQEVVAAVAAGSPGKKRVGRRSAAASGDHVPEFIGSPVAAAEAHSNWPKRYERSTAANKPEEDDELKARCHYRSAKVDNIVYCLGDDVYVKAGENEADYIGRITEFFEGTDRCHYFTCRWFFRAEDTVINSLVSINVDGHKHDPRRVFLSEEKNDNVLDCIISKVKIVHVDPNMDPKAKAQLIEHCDLYYDMSYSVAYSTFANISSENGQSGSETASGISSDDAGLETSSNMPERTATLLDLYSGCGGMSTGLCLGAALSGLKLETRWAVDLNSFACQSLKYNHPQTEVRNEKADEFLALLKEWAVLCEKYVHQDVDSNLAGSEDQEDADTLDKDEFVVQKLIGIRYDGTGRKKGVYFKVQWEGYGPEEDTWEPIDNLSDCPLKIREFVQEGRKRKILPLPGDVDVICGGPPCQGISGFNRFRNRDEPLKDEKNKQMVTFMDIVAYLKPKYVLMENVVDILKFADGYLGKYALSCLVAMKYQARLGMMVAGCYGLPQFRMRVFLWGALSSMVLPKYPLPTYDVVVRGGAPNAFSQCMVAYDETQRPSLKKALLLGDAFSDLPKVENHQPNDVMEYGGSPKTEFQRYIRLGRKDMLDWSFGEEAGPDEGKLLDHQPLRLNNDDYERVKQIPVKKGANFRDLKGVKVGANNVVEWDPEVERVYLSSGKPLVPDYAMSFIKGKSLKPFGRLWWDETVPTVVTRAEPHNQVILHPTQARVLTIRENARLQGFPDYYRLFGPIKEKYIQVGNAVAVPVARALGYCLGQAYLGESDGSQPLYQLPASFTSVGRTAVQANAVSVGTPAGEVVEQ.

Low complexity predominate over residues 1–14; it reads MAPSSPSSARPTRA. Disordered regions lie at residues 1 to 107 and 152 to 171; these read MAPS…AEEQ and HSNWPKRYERSTAANKPEED. Residues 21–30 are compositionally biased toward basic and acidic residues; the sequence is AMAEEIHQNQ. Over residues 42–57 the composition is skewed to basic residues; it reads AKRRRKAASSGKKPKP. Residues 71 to 80 show a composition bias toward basic and acidic residues; that stretch reads KKGETEKTEP. Residues 81-107 show a composition bias toward acidic residues; sequence VVDDVCAEEPDEEELAMGEEEAEAEEQ. The 126-residue stretch at 188–313 folds into the BAH domain; sequence IVYCLGDDVY…VAYSTFANIS (126 aa). Over residues 315–328 the composition is skewed to polar residues; that stretch reads ENGQSGSETASGIS. Residues 315–338 form a disordered region; it reads ENGQSGSETASGISSDDAGLETSS. An SAM-dependent MTase C5-type domain is found at 345 to 876; the sequence is ATLLDLYSGC…YCLGQAYLGE (532 aa). The Chromo domain occupies 445-508; it reads FVVQKLIGIR…EGRKRKILPL (64 aa). C521 is an active-site residue.

This sequence belongs to the class I-like SAM-binding methyltransferase superfamily. C5-methyltransferase family.

Its subcellular location is the nucleus. It catalyses the reaction a 2'-deoxycytidine in DNA + S-adenosyl-L-methionine = a 5-methyl-2'-deoxycytidine in DNA + S-adenosyl-L-homocysteine + H(+). Functionally, may be involved in the CpXpG methylation and in gene silencing. This Zea mays (Maize) protein is DNA (cytosine-5)-methyltransferase 3 (DMT105).